Consider the following 498-residue polypeptide: Acetyl-coenzyme A carboxylase carboxyl transferase subunit beta, chloroplastic (498 aa).

A disordered region spans residues 36–59; the sequence is SVNEDPIINDMDKDIPSGSDSDNS. Residues 231–498 form the CoA carboxyltransferase N-terminal domain; it reads LWVQCENCYG…FFPLNQNSIK (268 aa). C235, C238, C254, and C257 together coordinate Zn(2+). The segment at 235 to 257 adopts a C4-type zinc-finger fold; that stretch reads CENCYGLNYKRFLKSKMNICEHC.

Belongs to the AccD/PCCB family. As to quaternary structure, acetyl-CoA carboxylase is a heterohexamer composed of biotin carboxyl carrier protein, biotin carboxylase and 2 subunits each of ACCase subunit alpha and ACCase plastid-coded subunit beta (accD). Requires Zn(2+) as cofactor.

It localises to the plastid. The protein resides in the chloroplast stroma. It carries out the reaction N(6)-carboxybiotinyl-L-lysyl-[protein] + acetyl-CoA = N(6)-biotinyl-L-lysyl-[protein] + malonyl-CoA. The protein operates within lipid metabolism; malonyl-CoA biosynthesis; malonyl-CoA from acetyl-CoA: step 1/1. Component of the acetyl coenzyme A carboxylase (ACC) complex. Biotin carboxylase (BC) catalyzes the carboxylation of biotin on its carrier protein (BCCP) and then the CO(2) group is transferred by the transcarboxylase to acetyl-CoA to form malonyl-CoA. The protein is Acetyl-coenzyme A carboxylase carboxyl transferase subunit beta, chloroplastic of Morus indica (Mulberry).